A 465-amino-acid polypeptide reads, in one-letter code: Fumarate hydratase class II (465 aa).

Residues 98-100 (SGT), Arg-126, 129-132 (HPND), 139-141 (SSN), and Thr-187 each bind substrate. His-188 acts as the Proton donor/acceptor in catalysis. Ser-318 is an active-site residue. Substrate is bound by residues Ser-319 and 324-326 (KVN).

It belongs to the class-II fumarase/aspartase family. Fumarase subfamily. In terms of assembly, homotetramer.

Its subcellular location is the cytoplasm. The catalysed reaction is (S)-malate = fumarate + H2O. It functions in the pathway carbohydrate metabolism; tricarboxylic acid cycle; (S)-malate from fumarate: step 1/1. Involved in the TCA cycle. Catalyzes the stereospecific interconversion of fumarate to L-malate. The protein is Fumarate hydratase class II of Yersinia pestis.